The following is a 525-amino-acid chain: G-protein regulator 2 (525 aa).

Residues 424-445 (PVDMMDLIFSMSSRMDDQRTEL) form the GoLoco domain. The tract at residues 489 to 525 (TMNRILKRSKKSKSSLDSTNSIQGDDTRSDDVTMTSK) is disordered.

As to quaternary structure, interacts with gpr-1; gpr-1 forms a complex with lin-5 and GDP-bound goa-1.

The protein resides in the cytoplasm. It is found in the cell cortex. Its subcellular location is the cytoskeleton. It localises to the spindle. Functionally, in the 1-cell embryo, probably together with gpr-1, controls nuclear rotation and spindle elongation during mitosis. Complex of gpr-1 and gpr-2, in association with lin-5, activates G-protein signaling to affect mitotic spindle force. Polarity determinants (par genes) may regulate lin-5/gpr-1/gpr-2/goa-1 locally to create the asymmetric forces that drive spindle movement. This Caenorhabditis elegans protein is G-protein regulator 2 (gpr-2).